The primary structure comprises 120 residues: MSKIIDILEKEQIRTDLPEFGPGDTLVVQVKIREGNNERLQAFEGICIAKRNRGIGSSFTVRKISHGEGVERVFQTHSPLVSSVTVKRRGDVRRAKLYYLRALQGKAARIKEKLEKKASV.

Belongs to the bacterial ribosomal protein bL19 family.

In terms of biological role, this protein is located at the 30S-50S ribosomal subunit interface and may play a role in the structure and function of the aminoacyl-tRNA binding site. This chain is Large ribosomal subunit protein bL19, found in Dichelobacter nodosus (strain VCS1703A).